Here is a 261-residue protein sequence, read N- to C-terminus: MTTSNNVNGCFGDTKLTKVFVGGLAWDTHKEAMYDHFIKYGDILEAVIISDKLTRRSKGYGFVTFKDAKAATRACEDSTPIINGRRANCNLASLGGRLRKSPTMTSPQQGPKNGNRATPPHVGNHSQWYYPSGFTNQQHQQQNHQAVPFYGYPSAYVAPNMTFNQKVGYVGGTYMNGYYAQMQPQPQSQPQPQYYHHHMYGGGRVMVGAASPMVPFYTVYPYHQSQAIGFPQPSFSKPLSFSTPPISGTVGGESIQKKAIH.

The 78-residue stretch at 17-94 (TKVFVGGLAW…RRANCNLASL (78 aa)) folds into the RRM domain. A disordered region spans residues 96–122 (GRLRKSPTMTSPQQGPKNGNRATPPHV). Positions 102–116 (PTMTSPQQGPKNGNR) are enriched in polar residues.

As to expression, expressed in vasculature of leaves, roots and siliques.

The protein localises to the nucleus. Probable RNA-binding protein involved in the regulation of abscisic acid (ABA) response during seed germination. May regulate transcript levels of several germination-responsive genes under ABA. The chain is Probable RNA-binding protein ARP1 from Arabidopsis thaliana (Mouse-ear cress).